The following is a 195-amino-acid chain: CASP-like protein 1B1 (195 aa).

At 1 to 15 (MAKLALAATSGKSCK) the chain is on the cytoplasmic side. Residues 16 to 36 (ILLGLRLLAFSATLSAAIVMG) form a helical membrane-spanning segment. Residues 37 to 67 (LNKETETFVVGKVGNTPIKATFTAKFDHTPA) lie on the Extracellular side of the membrane. Residues 68 to 88 (FVFFVVANAMVSFHNLLMIAL) traverse the membrane as a helical segment. The Cytoplasmic segment spans residues 89-104 (QIFGGKMEFTGFRLLS). A helical transmembrane segment spans residues 105-125 (VAILDMLNVTLISAAANAAAF). The Extracellular portion of the chain corresponds to 126–154 (MAEVGKNGNKHARWDKICDRFATYCDHGA). A helical transmembrane segment spans residues 155–175 (GALIAAFAGVILMLIISAASI). The Cytoplasmic segment spans residues 176 to 195 (SRLAQQNKCCSTTASPSVVP).

This sequence belongs to the Casparian strip membrane proteins (CASP) family. As to quaternary structure, homodimer and heterodimers.

The protein resides in the cell membrane. This chain is CASP-like protein 1B1, found in Arabidopsis lyrata subsp. lyrata (Lyre-leaved rock-cress).